The following is a 153-amino-acid chain: Endoribonuclease YbeY (153 aa).

Zn(2+)-binding residues include histidine 113, histidine 117, and histidine 123.

Belongs to the endoribonuclease YbeY family. Requires Zn(2+) as cofactor.

The protein resides in the cytoplasm. Single strand-specific metallo-endoribonuclease involved in late-stage 70S ribosome quality control and in maturation of the 3' terminus of the 16S rRNA. This is Endoribonuclease YbeY from Aliivibrio fischeri (strain ATCC 700601 / ES114) (Vibrio fischeri).